A 232-amino-acid chain; its full sequence is Ribose-5-phosphate isomerase A (232 aa).

Residues 28-31 (TGST), 83-86 (DGAD), and 96-99 (KGGG) each bind substrate. The Proton acceptor role is filled by Glu105. Position 123 (Lys123) interacts with substrate.

Belongs to the ribose 5-phosphate isomerase family. As to quaternary structure, homodimer.

The enzyme catalyses aldehydo-D-ribose 5-phosphate = D-ribulose 5-phosphate. The protein operates within carbohydrate degradation; pentose phosphate pathway; D-ribose 5-phosphate from D-ribulose 5-phosphate (non-oxidative stage): step 1/1. Its function is as follows. Catalyzes the reversible conversion of ribose-5-phosphate to ribulose 5-phosphate. This chain is Ribose-5-phosphate isomerase A, found in Rhodopseudomonas palustris (strain BisB18).